Reading from the N-terminus, the 273-residue chain is Diaminopimelate epimerase (273 aa).

The substrate site is built by asparagine 11 and asparagine 60. Cysteine 69 serves as the catalytic Proton donor. Residues 70 to 71, asparagine 181, and 199 to 200 each bind substrate; these read GN and ER. Residue cysteine 209 is the Proton acceptor of the active site. Substrate is bound at residue 210–211; that stretch reads GT.

The protein belongs to the diaminopimelate epimerase family. In terms of assembly, homodimer.

Its subcellular location is the cytoplasm. The catalysed reaction is (2S,6S)-2,6-diaminopimelate = meso-2,6-diaminopimelate. It functions in the pathway amino-acid biosynthesis; L-lysine biosynthesis via DAP pathway; DL-2,6-diaminopimelate from LL-2,6-diaminopimelate: step 1/1. Its function is as follows. Catalyzes the stereoinversion of LL-2,6-diaminopimelate (L,L-DAP) to meso-diaminopimelate (meso-DAP), a precursor of L-lysine and an essential component of the bacterial peptidoglycan. The protein is Diaminopimelate epimerase of Helicobacter pylori (strain Shi470).